The sequence spans 509 residues: Maturase K (509 aa).

The protein belongs to the intron maturase 2 family. MatK subfamily.

The protein resides in the plastid. It is found in the chloroplast. Functionally, usually encoded in the trnK tRNA gene intron. Probably assists in splicing its own and other chloroplast group II introns. The sequence is that of Maturase K from Vachellia farnesiana (Sweet acacia).